Consider the following 78-residue polypeptide: Large ribosomal subunit protein bL28 (78 aa).

The protein belongs to the bacterial ribosomal protein bL28 family.

This chain is Large ribosomal subunit protein bL28, found in Nostoc sp. (strain PCC 7120 / SAG 25.82 / UTEX 2576).